Here is a 1253-residue protein sequence, read N- to C-terminus: Cytoplasmic FMR1-interacting protein 1 (1253 aa).

Serine 583 bears the Phosphoserine mark. The tract at residues 724-732 (DKRLRSECK) is EIF4E-binding. Threonine 1234 is modified (phosphothreonine).

Belongs to the CYFIP family. Component of the WAVE1 complex composed of ABI2, CYFIP1 or CYFIP2, BRK1, NCKAP1 and WASF1/WAVE1. Within the complex, a heterodimer containing NCKAP1 and CYFIP1 interacts with a heterotrimer formed by WAVE1, ABI2 and BRK1. Component of the CYFIP1-EIF4E-FMR1 complex which is composed of CYFIP, EIF4E and FMR1. Interacts with FMR1 but does not bind to related proteins FXR1 or FXR2. Interaction with EIF4E stimulates FMR1 binding. Component of the WAVE2 complex composed of ABI1, CYFIP1/SRA1, NCKAP1/NAP1 (NCKAP1L/HEM1 in hematopoietic cells) and WASF2/WAVE2. Interacts with the active GTP-bound form of RAC1. Interacts through its C-terminus with the C-terminus of DPYSL2/CRMP2 which is necessary for DPYSL2-induced axon outgrowth. Interacts with NYAP1, NYAP2 and MYO16. Interacts with TMEM108 (via N-terminus); the interaction associates TMEM108 with the WAVE1 complex. In terms of tissue distribution, highly expressed in embryonic and adult developing nervous system.

The protein localises to the cytoplasm. It localises to the perinuclear region. Its subcellular location is the cell projection. The protein resides in the lamellipodium. It is found in the ruffle. The protein localises to the synapse. It localises to the synaptosome. Functionally, component of the CYFIP1-EIF4E-FMR1 complex which binds to the mRNA cap and mediates translational repression. In the CYFIP1-EIF4E-FMR1 complex this subunit is an adapter between EIF4E and FMR1. Promotes the translation repression activity of FMR1 in brain probably by mediating its association with EIF4E and mRNA. Regulates formation of membrane ruffles and lamellipodia. Plays a role in axon outgrowth. Binds to F-actin but not to RNA. Part of the WAVE complex that regulates actin filament reorganization via its interaction with the Arp2/3 complex. Actin remodeling activity is regulated by RAC1. Regulator of epithelial morphogenesis. May act as an invasion suppressor in cancers. As component of the WAVE1 complex, required for BDNF-NTRK2 endocytic trafficking and signaling from early endosomes. In Mus musculus (Mouse), this protein is Cytoplasmic FMR1-interacting protein 1.